The sequence spans 642 residues: uncharacterized protein (642 aa).

The Mg(2+) site is built by E15 and D118. The PINc domain occupies V29 to E149. Positions D510–T578 constitute a KH domain.

This sequence in the N-terminal section; belongs to the PINc/VapC protein family. It depends on Mg(2+) as a cofactor.

This is an uncharacterized protein from Methanocaldococcus jannaschii (strain ATCC 43067 / DSM 2661 / JAL-1 / JCM 10045 / NBRC 100440) (Methanococcus jannaschii).